The primary structure comprises 167 residues: Large ribosomal subunit protein uL10 (167 aa).

It belongs to the universal ribosomal protein uL10 family. Part of the ribosomal stalk of the 50S ribosomal subunit. The N-terminus interacts with L11 and the large rRNA to form the base of the stalk. The C-terminus forms an elongated spine to which L12 dimers bind in a sequential fashion forming a multimeric L10(L12)X complex.

In terms of biological role, forms part of the ribosomal stalk, playing a central role in the interaction of the ribosome with GTP-bound translation factors. The polypeptide is Large ribosomal subunit protein uL10 (Tolumonas auensis (strain DSM 9187 / NBRC 110442 / TA 4)).